Consider the following 488-residue polypeptide: Nitrogen metabolite repression protein nmr (488 aa).

The tract at residues 1 to 45 (MPAEILSELPLRPAPRDIKIPNAMHNEERRHKHSRSSYSEMSPLM) is disordered. The span at 14–29 (APRDIKIPNAMHNEER) shows a compositional bias: basic and acidic residues. Over residues 36–45 (SSYSEMSPLM) the composition is skewed to polar residues. NADP(+) is bound by residues 71–76 (NAAGRQ), Asn165, Lys215, and 237–240 (YNNN). NAD(+)-binding positions include 75–76 (RQ), 165–167 (NTT), Lys215, and 237–240 (YNNN). The tract at residues 412 to 488 (EEYDGGGGNN…NKRADEEWLA (77 aa)) is dispensable for NMR function. The tract at residues 422–488 (IGNNHNNHHQ…NKRADEEWLA (67 aa)) is disordered. Positions 438 to 459 (HQNGHQNGHNGINGHIVNGGVD) are enriched in low complexity. Residues 460 to 473 (SESEEEDSDSDDEG) show a composition bias toward acidic residues.

Belongs to the NmrA-type oxidoreductase family. As to quaternary structure, interacts with nit-2.

It localises to the nucleus. Functionally, may be a redox sensor protein. Negative transcriptional regulator involved in the post-transcriptional modulation of the GATA-type transcription factor nit-2, forming part of a system controlling nitrogen metabolite repression. The sequence is that of Nitrogen metabolite repression protein nmr (nmr) from Neurospora crassa (strain ATCC 24698 / 74-OR23-1A / CBS 708.71 / DSM 1257 / FGSC 987).